Consider the following 192-residue polypeptide: Nucleoside triphosphate pyrophosphatase (192 aa).

D73 acts as the Proton acceptor in catalysis.

Belongs to the Maf family. The cofactor is a divalent metal cation.

The protein resides in the cytoplasm. It carries out the reaction a ribonucleoside 5'-triphosphate + H2O = a ribonucleoside 5'-phosphate + diphosphate + H(+). The enzyme catalyses a 2'-deoxyribonucleoside 5'-triphosphate + H2O = a 2'-deoxyribonucleoside 5'-phosphate + diphosphate + H(+). Its function is as follows. Nucleoside triphosphate pyrophosphatase. May have a dual role in cell division arrest and in preventing the incorporation of modified nucleotides into cellular nucleic acids. The chain is Nucleoside triphosphate pyrophosphatase from Ehrlichia canis (strain Jake).